Here is a 222-residue protein sequence, read N- to C-terminus: 7-cyano-7-deazaguanine synthase (222 aa).

Residue 11–21 (FSGGQDSTTCL) participates in ATP binding. Residues cysteine 187, cysteine 195, cysteine 198, and cysteine 201 each coordinate Zn(2+).

The protein belongs to the QueC family. It depends on Zn(2+) as a cofactor.

The enzyme catalyses 7-carboxy-7-deazaguanine + NH4(+) + ATP = 7-cyano-7-deazaguanine + ADP + phosphate + H2O + H(+). The protein operates within purine metabolism; 7-cyano-7-deazaguanine biosynthesis. In terms of biological role, catalyzes the ATP-dependent conversion of 7-carboxy-7-deazaguanine (CDG) to 7-cyano-7-deazaguanine (preQ(0)). This chain is 7-cyano-7-deazaguanine synthase, found in Actinobacillus pleuropneumoniae serotype 3 (strain JL03).